Here is a 133-residue protein sequence, read N- to C-terminus: Small ribosomal subunit protein uS8 (133 aa).

Belongs to the universal ribosomal protein uS8 family. Part of the 30S ribosomal subunit.

In terms of biological role, one of the primary rRNA binding proteins, it binds directly to 16S rRNA central domain where it helps coordinate assembly of the platform of the 30S subunit. This is Small ribosomal subunit protein uS8 from Saccharolobus islandicus (strain L.S.2.15 / Lassen #1) (Sulfolobus islandicus).